Here is a 409-residue protein sequence, read N- to C-terminus: Iron(III) salmochelin esterase (409 aa).

This sequence belongs to the Fes family.

Its subcellular location is the cytoplasm. It carries out the reaction Fe(III)-C-5-deoxy-beta-D-glucosyl-enterobactin + H2O = Fe(III)-{di[N-(2,3-dihydroxybenzoyl)-L-seryl]-N-(C-5-[deoxy-beta-D-glucosyl]-2,3-dihydroxybenzoyl)-L-serine} + H(+). The catalysed reaction is Fe(III)-{di[N-(2,3-dihydroxybenzoyl)-L-seryl]-N-(C-5-[deoxy-beta-D-glucosyl]-2,3-dihydroxybenzoyl)-L-serine} + H2O + H(+) = Fe(III)-{N-(2,3-dihydroxybenzoyl)-L-seryl-N-(C-5-[deoxy-beta-D-glucosyl]-2,3-dihydroxybenzoyl)-L-serine} + N-(2,3-dihydroxybenzoyl)-L-serine. It catalyses the reaction Fe(III)-{N-(2,3-dihydroxybenzoyl)-L-seryl-[N-(C-5-[deoxy-beta-D-glucosyl]-2,3-dihydroxybenzoyl)-L-serine]2} + H2O + H(+) = Fe(III)-{N-(2,3-dihydroxybenzoyl)-L-seryl-N-(C-5-[deoxy-beta-D-glucosyl]-2,3-dihydroxybenzoyl)-L-serine} + N-(C-5-[deoxy-beta-D-glucosyl]-2,3-dihydroxybenzoyl)-L-serine. The enzyme catalyses Fe(III)-di(C-5-deoxy-beta-D-glucosyl)-enterobactin + H2O = Fe(III)-{N-(2,3-dihydroxybenzoyl)-L-seryl-[N-(C-5-[deoxy-beta-D-glucosyl]-2,3-dihydroxybenzoyl)-L-serine]2} + H(+). It carries out the reaction Fe(III)-{N-(2,3-dihydroxybenzoyl)-L-seryl-[N-(C-5-[deoxy-beta-D-glucosyl]-2,3-dihydroxybenzoyl)-L-serine]2} + H2O + H(+) = Fe(III)-[N-(C-5-[deoxy-beta-D-glucosyl]-2,3-dihydroxybenzoyl)-L-serine]2 + N-(2,3-dihydroxybenzoyl)-L-serine. The catalysed reaction is Fe(III)-[N-(C-5-[deoxy-beta-D-glucosyl]-2,3-dihydroxybenzoyl)-L-serine]2 + H2O + H(+) = Fe(III)-[N-(C-5-[deoxy-beta-D-glucosyl]-2,3-dihydroxybenzoyl)-L-serine] + N-(C-5-[deoxy-beta-D-glucosyl]-2,3-dihydroxybenzoyl)-L-serine. Catalyzes the hydrolysis of both the apo and Fe3(+)-bound forms of enterobactin (Ent), monoglucosyl-C-Ent (MGE), diglucosyl-C-Ent (DGE) and triglucosyl-C-Ent (TGE). Shows higher catalytic efficiencies on Fe3(+)-bound forms. The initial linear trimer products are, in turn, very good substrates for further hydrolytic cleavage by IroD, leading to complete degradation of the trilactone to DHB-Ser and/or Glc-DHB-Ser monomers. Hydrolyzes MGE and DGE regioselectively. May be the ferric MGE/DGE esterase responsible for cytoplasmic iron release. This is Iron(III) salmochelin esterase from Escherichia coli O6:H1 (strain CFT073 / ATCC 700928 / UPEC).